A 153-amino-acid polypeptide reads, in one-letter code: UPF0756 membrane protein BA_4840/GBAA_4840/BAS4489 (153 aa).

The next 4 helical transmembrane spans lie at Phe-8–Ile-28, Leu-54–Phe-74, Trp-87–Leu-107, and Leu-117–Ile-137.

The protein belongs to the UPF0756 family.

It localises to the cell membrane. This Bacillus anthracis protein is UPF0756 membrane protein BA_4840/GBAA_4840/BAS4489.